The sequence spans 648 residues: Mitotic interactor and substrate of PLK1 (648 aa).

Position 77 is a phosphoserine; by CDK1 (Ser-77). Thr-149 and Thr-190 each carry phosphothreonine. Ser-220 carries the phosphoserine modification. 2 disordered regions span residues 242–383 (VNDP…PEAR) and 430–460 (KATESPRHVSESSGRSLSSKQEWSKPPGKAT). Ser-253 carries the phosphoserine; by CDK1 modification. Residues 255–281 (ETPKETPIEREIRLAQEREAELREQRG) are compositionally biased toward basic and acidic residues. Phosphothreonine; by CDK1 is present on Thr-256. The residue at position 318 (Ser-318) is a Phosphoserine. Residues 325-339 (MVQETQREEDHRREG) are compositionally biased toward basic and acidic residues. Thr-347 is modified (phosphothreonine; by CDK1). Positions 349–367 (DWPSQDPQPGLQRSLSSDC) are enriched in polar residues. 2 positions are modified to phosphoserine: Ser-352 and Ser-364. Phosphoserine; by PLK1 is present on residues Ser-365 and Ser-439. Residues 440-450 (ESSGRSLSSKQ) show a composition bias toward polar residues. Residues Ser-507 and Ser-509 each carry the phosphoserine modification. Positions 511-534 (DLLEREMESVLRREREVAEERRNA) form a coiled coil. The segment at 539-568 (VFSPVPAEDESHEQDSRSSSRASGITGSYS) is disordered. Ser-541 carries the phosphoserine; by CDK1 modification. Ser-554 is modified (phosphoserine; by PLK1). Positions 557-568 (SSRASGITGSYS) are enriched in polar residues. Ser-644 carries the post-translational modification Phosphoserine.

Belongs to the MISP family. In terms of assembly, associates with F-actin. Interacts with DCTN1; this interaction regulates DCTN1 distribution at the cell cortex. Interacts with PTK2/FAK and MAPRE1. Phosphorylated by CDK1 and PLK1. CDK1 is the priming kinase for PLK1 phosphorylation. Phosphorylation by PLK1 is required for proper spindle orientation at metaphase.

Its subcellular location is the cell junction. The protein localises to the focal adhesion. It is found in the cytoplasm. It localises to the cytoskeleton. The protein resides in the cell cortex. Functionally, plays a role in mitotic spindle orientation and mitotic progression. Regulates the distribution of dynactin at the cell cortex in a PLK1-dependent manner, thus stabilizing cortical and astral microtubule attachments required for proper mitotic spindle positioning. May link microtubules to the actin cytoskeleton and focal adhesions. May be required for directed cell migration and centrosome orientation. May also be necessary for proper stacking of the Golgi apparatus. This Mus musculus (Mouse) protein is Mitotic interactor and substrate of PLK1.